A 646-amino-acid chain; its full sequence is A-kinase anchor protein 8-like (646 aa).

Residues 1 to 268 (MSYTGFVQGS…MRRTWKTWTT (268 aa)) form a sufficient for activation of CTE-mediated expression region. Arg208 carries the asymmetric dimethylarginine; alternate modification. The residue at position 208 (Arg208) is an Omega-N-methylarginine; alternate. Omega-N-methylarginine occurs at positions 217, 237, and 247. Lys257 is modified (N6-acetyllysine). The disordered stretch occupies residues 264–381 (KTWTTADFRT…QDKQKKRQRD (118 aa)). Thr267 is subject to Phosphothreonine. Residues 274–279 (KKKKRK) carry the Nuclear localization signal motif. The Nuclear export signal (NES) signature appears at 280-296 (QGGSPDEPDSKATRTDC). Position 283 is a phosphoserine (Ser283). Residues 287-296 (PDSKATRTDC) are compositionally biased toward basic and acidic residues. The residue at position 292 (Thr292) is a Phosphothreonine. Ser297 bears the Phosphoserine mark. A compositionally biased stretch (acidic residues) spans 298-314 (DNSDSDNDEGTEGEATE). Basic and acidic residues predominate over residues 337-349 (EDGREEGKEDPEK). The Nuclear localization signal signature appears at 362-364 (KRK). 2 consecutive C2H2 AKAP95-type zinc fingers follow at residues 391–413 (CSLCKYRTFYEDEMASHLDSKFH) and 484–507 (CAACDLFIPMQFGIIQKHLKTMDH). The tract at residues 545–646 (GENPFTDSPE…DDEEGGGGAP (102 aa)) is disordered. Residue Ser552 is modified to Phosphoserine. The segment covering 552–563 (SPEEEKEQEEAE) has biased composition (acidic residues). A compositionally biased stretch (low complexity) spans 564–586 (GGALDEGAQGEAAGISEGAEGVP). Pro residues predominate over residues 587–607 (AQPPVPPEPAPGAVSPPPPPP). A compositionally biased stretch (acidic residues) spans 634-646 (DVEDDEEGGGGAP).

The protein belongs to the AKAP95 family. Interacts (via N-terminus) with DHX9 (via RGG region). Interacts with TMPO isoform Beta, PRPF40A, RNF43, lamin-B. Interacts with HDAC3; increased during mitosis. Interacts with EBV EBNA-LP. Interacts with HIV-1 reverse transcriptase/ribonuclease H. In terms of processing, phosphorylated on serine or threonine residues possibly by PKA; probably modulating the interaction with TMPO isoform Beta. Ubiquitously expressed. Expressed in the brain cortex (at protein level).

It localises to the nucleus. The protein localises to the nucleus matrix. The protein resides in the nucleus speckle. Its subcellular location is the PML body. It is found in the cytoplasm. Its function is as follows. Could play a role in constitutive transport element (CTE)-mediated gene expression by association with DHX9. Increases CTE-dependent nuclear unspliced mRNA export. Proposed to target PRKACA to the nucleus but does not seem to be implicated in the binding of regulatory subunit II of PKA. May be involved in nuclear envelope breakdown and chromatin condensation. May be involved in anchoring nuclear membranes to chromatin in interphase and in releasing membranes from chromating at mitosis. May regulate the initiation phase of DNA replication when associated with TMPO isoform Beta. Required for cell cycle G2/M transition and histone deacetylation during mitosis. In mitotic cells recruits HDAC3 to the vicinity of chromatin leading to deacetylation and subsequent phosphorylation at 'Ser-10' of histone H3; in this function seems to act redundantly with AKAP8. May be involved in regulation of pre-mRNA splicing. (Microbial infection) In case of EBV infection, may target PRKACA to EBNA-LP-containing nuclear sites to modulate transcription from specific promoters. In terms of biological role, (Microbial infection) Can synergize with DHX9 to activate the CTE-mediated gene expression of type D retroviruses. Functionally, (Microbial infection) In case of HIV-1 infection, involved in the DHX9-promoted annealing of host tRNA(Lys3) to viral genomic RNA as a primer in reverse transcription; in vitro negatively regulates DHX9 annealing activity. This chain is A-kinase anchor protein 8-like (AKAP8L), found in Homo sapiens (Human).